We begin with the raw amino-acid sequence, 1215 residues long: RNA-dependent RNA polymerase 1 (1215 aa).

The protein belongs to the RdRP family. As to quaternary structure, cid12, hrr1 and rdp1 interact forming the RNA-directed RNA polymerase complex (RDRC). The RDRC complex interacts with the RITS complex via interaction between ago1 and hrr1. Clr4 has a role in mediating this interaction.

It localises to the cytoplasm. It is found in the nucleus. The protein localises to the chromosome. The protein resides in the telomere. Its subcellular location is the centromere. The enzyme catalyses RNA(n) + a ribonucleoside 5'-triphosphate = RNA(n+1) + diphosphate. In terms of biological role, has a role in the RNA interference (RNAi) pathway which is important for heterochromatin formation, accurate chromosome segregation, centromere cohesion and telomere function during mitosis and meiosis. Required for both post-transcriptional and transcriptional gene silencing. Required for silencing at the centromeres and for initiation of transcriptionally silent heterochromatin at the mating type locus. Promotes histone H3 'Lys-10' methylation necessary for centromere function. Required for recruitment of swi6 and cohesin to an ectopic dg repeat. A member of the RNA-directed RNA polymerase complex (RDRC) which is involved in the generation of small interfering RNAs (siRNAs) and mediates their association with the RNA-induced transcriptional silencing (RITS) complex. RITS acts as a priming complex for dsRNA synthesis at the site of non-coding centromeric RNA. Its RNA-dependent RNA polymerase activity is critical in siRNA production necessary for heterochromatin formation. This chain is RNA-dependent RNA polymerase 1 (rdp1), found in Schizosaccharomyces pombe (strain 972 / ATCC 24843) (Fission yeast).